A 485-amino-acid polypeptide reads, in one-letter code: Glutamate--tRNA ligase (485 aa).

The 'HIGH' region motif lies at P11 to N21. Positions K252–R256 match the 'KMSKS' region motif. Residue K255 participates in ATP binding.

The protein belongs to the class-I aminoacyl-tRNA synthetase family. Glutamate--tRNA ligase type 1 subfamily. As to quaternary structure, monomer.

The protein resides in the cytoplasm. It carries out the reaction tRNA(Glu) + L-glutamate + ATP = L-glutamyl-tRNA(Glu) + AMP + diphosphate. In terms of biological role, catalyzes the attachment of glutamate to tRNA(Glu) in a two-step reaction: glutamate is first activated by ATP to form Glu-AMP and then transferred to the acceptor end of tRNA(Glu). This Bacillus thuringiensis (strain Al Hakam) protein is Glutamate--tRNA ligase.